Consider the following 286-residue polypeptide: VDRYNELMMNYSDETADEGAKLQDMIDSQNLWDLENQVEMAMDALRCPPGDSAVTGLSGGERRRVALCKLLLSQPDLLLLDEPTNHLDAETIAWLEKHLRDYPGAVMMITHDRYFLDNVTGWILELDRGRGIPYEGNYSAYLQAKAKRMQQEAREDASRQKAISREQEWIASSPKARQTKSKARIRRYDELVEAAENRRPGDAQIVIPVAERLGRVVIEAENLTKSYGDRVLIENLTFKLPPGGIVGVIGPNGAGKTTLFRMITGQEQPDSGSVTVGETVHLGYVD.

The ABC transporter domain maps to 21–85 (KLQDMIDSQN…DLLLLDEPTN (65 aa)).

The protein belongs to the ABC transporter superfamily.

The induction of virG by growth under acidic conditions and by phosphate starvation, in the absence of plant inducers, is influenced by ChvD. This Rhizobium radiobacter (Agrobacterium tumefaciens) protein is ATP-binding protein ChvD (chvD).